A 184-amino-acid polypeptide reads, in one-letter code: Alpha-tubulin N-acetyltransferase (184 aa).

The N-acetyltransferase domain occupies 1 to 174; sequence MDTHGEKMKN…NNFVIFAEYF (174 aa). Residues 108 to 121 and 144 to 153 each bind acetyl-CoA; these read FYIRRDFRKRGLGL and SHKLRSFLKK.

It belongs to the acetyltransferase ATAT1 family.

The enzyme catalyses L-lysyl-[alpha-tubulin] + acetyl-CoA = N(6)-acetyl-L-lysyl-[alpha-tubulin] + CoA + H(+). Functionally, specifically acetylates 'Lys-40' in alpha-tubulin on the lumenal side of microtubules. Promotes microtubule destabilization and accelerates microtubule dynamics; this activity may be independent of acetylation activity. Acetylates alpha-tubulin with a slow enzymatic rate, due to a catalytic site that is not optimized for acetyl transfer. Enters the microtubule through each end and diffuses quickly throughout the lumen of microtubules. Acetylates only long/old microtubules because of its slow acetylation rate since it does not have time to act on dynamically unstable microtubules before the enzyme is released. This is Alpha-tubulin N-acetyltransferase from Plasmodium vivax (strain Salvador I).